Reading from the N-terminus, the 199-residue chain is Large ribosomal subunit protein bL9 (199 aa).

The segment covering 149-166 (AEAERINRGEDINSRQED) has biased composition (basic and acidic residues). Residues 149 to 199 (AEAERINRGEDINSRQEDQDAAAEAIAAAGEFFDPEAQDETPETEAASEQQ) are disordered. Positions 181–191 (FDPEAQDETPE) are enriched in acidic residues.

The protein belongs to the bacterial ribosomal protein bL9 family.

In terms of biological role, binds to the 23S rRNA. This Afipia carboxidovorans (strain ATCC 49405 / DSM 1227 / KCTC 32145 / OM5) (Oligotropha carboxidovorans) protein is Large ribosomal subunit protein bL9.